A 350-amino-acid polypeptide reads, in one-letter code: Dihydroorotate dehydrogenase (quinone) (350 aa).

Residues 59 to 63 (AGLDK) and Thr83 contribute to the FMN site. A substrate-binding site is contributed by Lys63. 108–112 (NRMGF) serves as a coordination point for substrate. The FMN site is built by Asn136 and Asn169. Position 169 (Asn169) interacts with substrate. Ser172 serves as the catalytic Nucleophile. Residue Asn174 coordinates substrate. The FMN site is built by Lys214 and Thr242. A substrate-binding site is contributed by 243–244 (NT). FMN is bound by residues Gly265, Gly294, and 315–316 (YS).

This sequence belongs to the dihydroorotate dehydrogenase family. Type 2 subfamily. In terms of assembly, monomer. Requires FMN as cofactor.

The protein localises to the cell membrane. It catalyses the reaction (S)-dihydroorotate + a quinone = orotate + a quinol. Its pathway is pyrimidine metabolism; UMP biosynthesis via de novo pathway; orotate from (S)-dihydroorotate (quinone route): step 1/1. In terms of biological role, catalyzes the conversion of dihydroorotate to orotate with quinone as electron acceptor. This Aromatoleum aromaticum (strain DSM 19018 / LMG 30748 / EbN1) (Azoarcus sp. (strain EbN1)) protein is Dihydroorotate dehydrogenase (quinone).